A 149-amino-acid chain; its full sequence is 3-dehydroquinate dehydratase (149 aa).

The active-site Proton acceptor is Tyr26. Positions 77, 83, and 90 each coordinate substrate. His103 acts as the Proton donor in catalysis. Substrate-binding positions include 104–105 (LS) and Arg114.

It belongs to the type-II 3-dehydroquinase family. In terms of assembly, homododecamer.

It catalyses the reaction 3-dehydroquinate = 3-dehydroshikimate + H2O. It participates in metabolic intermediate biosynthesis; chorismate biosynthesis; chorismate from D-erythrose 4-phosphate and phosphoenolpyruvate: step 3/7. In terms of biological role, catalyzes a trans-dehydration via an enolate intermediate. In Vibrio vulnificus (strain YJ016), this protein is 3-dehydroquinate dehydratase.